Consider the following 678-residue polypeptide: MSHSNAPELHPQIVDPFHNVTYRPGKLLGKGGFAYVYEFHDVNSDSSYACKITPRSALQKKKYYDKFVTEVTIHRGLVHPNICRVLNVFKDQMNYYIILEKCNGGTLTDLIRRRKHLTETEARFFSKRILNALWYLHDLYIIHRDIKTSNIFLMEDFDVKVGDFGLAVKCETPEELHWTMCGTPNFLPSEVIYSHIMKRKASGRGPDPNLDEDCVNLCHQLLPAYSGQGHSFSADMWSFGCLVFSMIYGRPPFEAADIKTTYKRIVRCDFSFPGSISVSEDLKNFIKGLLTPDPRKRFTVKECLDHSWLNPSKYFIPESLPPRIISEPYEVPPLCSASPTRNMQMTINMAKNAGGTDGRFIAATPQAIGGTEHIPTPGTANFYKPQNAILTTKSAAGISRASTAMAMQNVGSAQGVVNKYGINEAEYPQIDPPCYIMSWVDYSNRYGFAYQISNGSIGVIFNDESAAILSPNALIVDYSPSLLDAAFDRALFEEGTTILSEKKFKLLSFFRDYLENRSIVPIPAADRPKEDEELKRVIEQERMNNQEIDFKRLTKGLPLPQLFLKKWKLYDDGTLCLLFNTKVFQVNFADHSKVVVAHRSVTFMSEKREIYTYPSEYLKDDRFSFKELRRRVDRARKYYEIIKAARPVDSLAQYRYNKDSTKKSASGSSTRQLGQGGE.

The Protein kinase domain occupies 22 to 309 (YRPGKLLGKG…VKECLDHSWL (288 aa)). ATP-binding positions include 28–36 (LGKGGFAYV) and K51. The Proton acceptor role is filled by D145. Phosphothreonine; by autocatalysis is present on residues T179 and T183. POLO box domains lie at 435-516 (YIMS…YLEN) and 563-644 (FLKK…IIKA). A disordered region spans residues 658 to 678 (KDSTKKSASGSSTRQLGQGGE). Residues 663-678 (KSASGSSTRQLGQGGE) show a composition bias toward polar residues.

This sequence belongs to the protein kinase superfamily. Ser/Thr protein kinase family. CDC5/Polo subfamily. In terms of assembly, interacts with Kin-13. In terms of processing, autophosphorylated. Autophosphorylation is critical for its function in cell growth, cytokinesis and formation of flagella.

The protein localises to the cell projection. It localises to the cilium. The protein resides in the flagellum. It is found in the cytoplasm. Its subcellular location is the cytoskeleton. The protein localises to the flagellum basal body. It localises to the flagellum axoneme. The protein resides in the spindle. It is found in the membrane. It catalyses the reaction L-seryl-[protein] + ATP = O-phospho-L-seryl-[protein] + ADP + H(+). It carries out the reaction L-threonyl-[protein] + ATP = O-phospho-L-threonyl-[protein] + ADP + H(+). Its activity is regulated as follows. Inhibited by GW843286X (GW), an ATP-competitive inhibitor. Inhibition leads to reduced growth, increased number of cells with more than four nuclei, increased number of cells with condensed nuclei, cell cycle arrest at G2/M or G1/S phase depending on the treatment time with GW, and increased length of membrane-bound portions of the caudal and anterior flagella. Involved in cell cycle. Involved in cell division. Involved in cytokinesis. Involved in flagella biogenesis and in regulation of flagella length in interphase. Involved in formation of median bodies during interphase. Phosphorylates Kin-13 in vitro. Likely regulates microtubule (MT) depolymerizing activity of Kin-13. This Giardia intestinalis (strain ATCC 50803 / WB clone C6) (Giardia lamblia) protein is Serine/threonine-protein kinase PLK.